A 458-amino-acid chain; its full sequence is UDP-N-acetylmuramoylalanine--D-glutamate ligase (458 aa).

ATP is bound at residue 118–124 (GTNGKTT).

It belongs to the MurCDEF family.

It localises to the cytoplasm. The catalysed reaction is UDP-N-acetyl-alpha-D-muramoyl-L-alanine + D-glutamate + ATP = UDP-N-acetyl-alpha-D-muramoyl-L-alanyl-D-glutamate + ADP + phosphate + H(+). It participates in cell wall biogenesis; peptidoglycan biosynthesis. Cell wall formation. Catalyzes the addition of glutamate to the nucleotide precursor UDP-N-acetylmuramoyl-L-alanine (UMA). The protein is UDP-N-acetylmuramoylalanine--D-glutamate ligase of Ligilactobacillus salivarius (strain UCC118) (Lactobacillus salivarius).